A 294-amino-acid chain; its full sequence is MRDYIVRATAYNNKILAIAAFSTQTAQKAKEIHNLTPTTCAALGRALTAVAMMRVMMKGEKDKVTLVIKGDGPIGNIVVVSNYPGIVKGYVGNPTVDLPLSEKGKLDVGKAVGKNGYVTVIKDIGLKEPYVGTVELQTGEIGEDIAYYFYTSEQVPSAVGVGVLVGKEGNVLASGGFIIQLLPNIEEEVVAKVEEALKNISSVTELLRKGYLPEDILNHILGEMGLNILERVDLKYECDCSQERFETAIIALGKEEIKKLIAEGQSVEAVCHFCGKKYLIEESRLKELLRIAEE.

Intrachain disulfides connect C238–C240 and C271–C274.

The protein belongs to the HSP33 family. Under oxidizing conditions two disulfide bonds are formed involving the reactive cysteines. Under reducing conditions zinc is bound to the reactive cysteines and the protein is inactive.

Its subcellular location is the cytoplasm. In terms of biological role, redox regulated molecular chaperone. Protects both thermally unfolding and oxidatively damaged proteins from irreversible aggregation. Plays an important role in the bacterial defense system toward oxidative stress. The chain is 33 kDa chaperonin from Thermoanaerobacter pseudethanolicus (strain ATCC 33223 / 39E) (Clostridium thermohydrosulfuricum).